The sequence spans 1791 residues: Protein TIC 214 (1791 aa).

6 helical membrane-spanning segments follow: residues 19–39 (IINS…FSIG), 68–88 (FIAG…HLAL), 91–111 (PHTI…WNNH), 133–153 (VFLN…SSML), 176–196 (VGWL…LVWI), and 230–250 (IFSI…PSPI). Positions 257–271 (GTSETEERGGTKQDQ) are enriched in basic and acidic residues. 2 disordered regions span residues 257-278 (GTSE…TEEA) and 1498-1521 (ADQG…PNQE).

Belongs to the TIC214 family. Part of the Tic complex.

It is found in the plastid. The protein resides in the chloroplast inner membrane. Involved in protein precursor import into chloroplasts. May be part of an intermediate translocation complex acting as a protein-conducting channel at the inner envelope. The chain is Protein TIC 214 from Aethionema grandiflorum (Persian stone-cress).